The chain runs to 534 residues: ATP synthase subunit alpha (534 aa).

Position 170 to 177 (170 to 177) interacts with ATP; that stretch reads GDRQTGKT. The disordered stretch occupies residues 505 to 534; it reads HEDARVKSETAQAAGKDKDEKAAATAGAGK.

It belongs to the ATPase alpha/beta chains family. In terms of assembly, F-type ATPases have 2 components, CF(1) - the catalytic core - and CF(0) - the membrane proton channel. CF(1) has five subunits: alpha(3), beta(3), gamma(1), delta(1), epsilon(1). CF(0) has three main subunits: a(1), b(2) and c(9-12). The alpha and beta chains form an alternating ring which encloses part of the gamma chain. CF(1) is attached to CF(0) by a central stalk formed by the gamma and epsilon chains, while a peripheral stalk is formed by the delta and b chains.

The protein resides in the cell inner membrane. It carries out the reaction ATP + H2O + 4 H(+)(in) = ADP + phosphate + 5 H(+)(out). Its function is as follows. Produces ATP from ADP in the presence of a proton gradient across the membrane. The alpha chain is a regulatory subunit. This Acidobacterium capsulatum (strain ATCC 51196 / DSM 11244 / BCRC 80197 / JCM 7670 / NBRC 15755 / NCIMB 13165 / 161) protein is ATP synthase subunit alpha.